The chain runs to 156 residues: ATP synthase subunit b (156 aa).

Residues 11 to 31 (AIAFVLFVIFCMKYVWPPIMA) traverse the membrane as a helical segment.

The protein belongs to the ATPase B chain family. In terms of assembly, F-type ATPases have 2 components, F(1) - the catalytic core - and F(0) - the membrane proton channel. F(1) has five subunits: alpha(3), beta(3), gamma(1), delta(1), epsilon(1). F(0) has three main subunits: a(1), b(2) and c(10-14). The alpha and beta chains form an alternating ring which encloses part of the gamma chain. F(1) is attached to F(0) by a central stalk formed by the gamma and epsilon chains, while a peripheral stalk is formed by the delta and b chains.

It localises to the cell inner membrane. Its function is as follows. F(1)F(0) ATP synthase produces ATP from ADP in the presence of a proton or sodium gradient. F-type ATPases consist of two structural domains, F(1) containing the extramembraneous catalytic core and F(0) containing the membrane proton channel, linked together by a central stalk and a peripheral stalk. During catalysis, ATP synthesis in the catalytic domain of F(1) is coupled via a rotary mechanism of the central stalk subunits to proton translocation. Component of the F(0) channel, it forms part of the peripheral stalk, linking F(1) to F(0). This Yersinia pseudotuberculosis serotype O:1b (strain IP 31758) protein is ATP synthase subunit b.